Here is a 185-residue protein sequence, read N- to C-terminus: Ribosome-recycling factor (185 aa).

It belongs to the RRF family.

Its subcellular location is the cytoplasm. In terms of biological role, responsible for the release of ribosomes from messenger RNA at the termination of protein biosynthesis. May increase the efficiency of translation by recycling ribosomes from one round of translation to another. This is Ribosome-recycling factor from Shewanella baltica (strain OS223).